The sequence spans 219 residues: Endonuclease V (219 aa).

Asp-41 and Asp-107 together coordinate Mg(2+).

It belongs to the endonuclease V family. The cofactor is Mg(2+).

It localises to the cytoplasm. It catalyses the reaction Endonucleolytic cleavage at apurinic or apyrimidinic sites to products with a 5'-phosphate.. Its function is as follows. DNA repair enzyme involved in the repair of deaminated bases. Selectively cleaves double-stranded DNA at the second phosphodiester bond 3' to a deoxyinosine leaving behind the intact lesion on the nicked DNA. The chain is Endonuclease V from Desulfurococcus amylolyticus (strain DSM 18924 / JCM 16383 / VKM B-2413 / 1221n) (Desulfurococcus kamchatkensis).